The sequence spans 394 residues: Choline/ethanolamine kinase (394 aa).

N-acetylalanine is present on alanine 2. Positions 22–42 are disordered; it reads GLLDAKCPEPIPNRRRSSSLS. ATP-binding positions include 75–81, arginine 104, 146–152, glutamine 244, and aspartate 264; these read SGGLSNL and QYLPSRP. 77-79 lines the substrate pocket; it reads GLS.

The protein belongs to the choline/ethanolamine kinase family. Homodimer, and heterodimer with CHKA.

It carries out the reaction choline + ATP = phosphocholine + ADP + H(+). The enzyme catalyses ethanolamine + ATP = phosphoethanolamine + ADP + H(+). It participates in phospholipid metabolism; phosphatidylethanolamine biosynthesis; phosphatidylethanolamine from ethanolamine: step 1/3. Its function is as follows. Has a key role in phospholipid metabolism, and catalyzes the first step of phosphatidylethanolamine and phosphatidylcholine biosynthesis. The polypeptide is Choline/ethanolamine kinase (Chkb) (Rattus norvegicus (Rat)).